We begin with the raw amino-acid sequence, 492 residues long: Pre-mRNA-splicing factor sap61 (492 aa).

The segment at 243-267 (FYCEVCQKFFGKITVFEAHKKSKAH) adopts a C2H2-type zinc-finger fold. 2 disordered regions span residues 268–291 (NKAVKRMQSSSPSTTSNTNEKQKG) and 337–365 (AAEREAFEQSTPSVSVEGNQDEESDQDDE). A compositionally biased stretch (low complexity) spans 276 to 286 (SSSPSTTSNTN). The span at 345 to 354 (QSTPSVSVEG) shows a compositional bias: polar residues. Residues 355-365 (NQDEESDQDDE) are compositionally biased toward acidic residues. Position 360 is a phosphoserine (Ser360). The Matrin-type zinc finger occupies 397–428 (FPCEICGNYVYMGRKAFDKHFTEQRHIYGLKC).

It belongs to the SF3A3 family. Belongs to the 40S cdc5-associated complex (or cwf complex), a spliceosome sub-complex reminiscent of a late-stage spliceosome composed of the U2, U5 and U6 snRNAs and at least brr2, cdc5, cwf2/prp3, cwf3/syf1, cwf4/syf3, cwf5/ecm2, spp42/cwf6, cwf7/spf27, cwf8, cwf9, cwf10, cwf11, cwf12, prp45/cwf13, cwf14, cwf15, cwf16, cwf17, cwf18, cwf19, cwf20, cwf21, cwf22, cwf23, cwf24, cwf25, cwf26, cyp7/cwf27, cwf28, cwf29/ist3, lea1, msl1, prp5/cwf1, prp10, prp12/sap130, prp17, prp22, sap61, sap62, sap114, sap145, slu7, smb1, smd1, smd3, smf1, smg1 and syf2.

It is found in the nucleus. Its subcellular location is the cytoplasm. Functionally, involved in mRNA splicing where it associates with cdc5 and the other cwf proteins as part of the spliceosome. The protein is Pre-mRNA-splicing factor sap61 (sap61) of Schizosaccharomyces pombe (strain 972 / ATCC 24843) (Fission yeast).